The following is a 131-amino-acid chain: Large ribosomal subunit protein bL17 (131 aa).

The protein belongs to the bacterial ribosomal protein bL17 family. In terms of assembly, part of the 50S ribosomal subunit. Contacts protein L32.

The protein is Large ribosomal subunit protein bL17 of Shewanella baltica (strain OS223).